The following is a 180-amino-acid chain: UPF0227 protein YpsIP31758_1593 (180 aa).

This sequence belongs to the UPF0227 family.

The sequence is that of UPF0227 protein YpsIP31758_1593 from Yersinia pseudotuberculosis serotype O:1b (strain IP 31758).